Consider the following 257-residue polypeptide: Adenylate kinase (257 aa).

Residue 51–56 coordinates ATP; sequence GAGKGT. The segment at 71 to 100 is NMP; sequence ATGDMLRSQVAKKTELGKEAKKIMDQGGLV. AMP-binding positions include Thr-72, Arg-77, 98-100, 127-130, and Gln-134; these read GLV and GFPR. An LID region spans residues 168–205; that stretch reads GRLVHPASGRSYHKIFNPPKQEMKDDITGEPLIQRSDD. ATP-binding positions include Arg-169 and 178–179; that span reads SY. AMP contacts are provided by Arg-202 and Arg-213. ATP is bound at residue Gln-241.

Belongs to the adenylate kinase family. AK2 subfamily. In terms of assembly, monomer.

Its subcellular location is the cytoplasm. The protein resides in the cytosol. It is found in the mitochondrion intermembrane space. It carries out the reaction AMP + ATP = 2 ADP. In terms of biological role, catalyzes the reversible transfer of the terminal phosphate group between ATP and AMP. Plays an important role in cellular energy homeostasis and in adenine nucleotide metabolism. Adenylate kinase activity is critical for regulation of the phosphate utilization and the AMP de novo biosynthesis pathways. The protein is Adenylate kinase (adk1) of Aspergillus terreus (strain NIH 2624 / FGSC A1156).